Consider the following 935-residue polypeptide: Probable mediator of RNA polymerase II transcription subunit 15c (935 aa).

Residues 1 to 13 (MEGNTNWKPNEQG) are compositionally biased toward polar residues. 5 disordered regions span residues 1–28 (MEGN…WRSQ), 170–190 (NLPT…VSSS), 495–526 (SSVQ…HQMQ), 548–611 (QQVS…PVPG), and 635–654 (SSSK…PPEP). Residues 511–526 (MQQQQPQQGNHQHQMQ) show a composition bias toward low complexity. 2 stretches are compositionally biased toward polar residues: residues 548 to 577 (QQVS…SPQL) and 635 to 644 (SSSKLGTQET).

It belongs to the plant Mediator complex subunit 15 family. In terms of assembly, component of the Mediator complex.

The protein resides in the nucleus. Functionally, component of the Mediator complex, a coactivator involved in the regulated transcription of nearly all RNA polymerase II-dependent genes. Mediator functions as a bridge to convey information from gene-specific regulatory proteins to the basal RNA polymerase II transcription machinery. The Mediator complex, having a compact conformation in its free form, is recruited to promoters by direct interactions with regulatory proteins and serves for the assembly of a functional preinitiation complex with RNA polymerase II and the general transcription factors. The polypeptide is Probable mediator of RNA polymerase II transcription subunit 15c (MED15C) (Arabidopsis thaliana (Mouse-ear cress)).